We begin with the raw amino-acid sequence, 570 residues long: Molecular chaperone MKKS (570 aa).

Residue 192 to 199 (ERMVLGKS) coordinates ATP. The tract at residues 198 to 370 (KSIIVPLKGQ…FHLLPNEATV (173 aa)) is substrate-binding apical domain.

Belongs to the TCP-1 chaperonin family. As to quaternary structure, component of a complex composed at least of MKKS, BBS10, BBS12, TCP1, CCT2, CCT3, CCT4, CCT5 and CCT8. Interacts with STUB1. Interacts with BBS2 (via coiled coil domain). Interacts with CCDC28B. Interacts with BBS12. Interacts with SMARCC1, a component of the SWI/SNF complexes; the interaction takes place predominantly in the cytoplasm and may modulate SMARCC1 location. Interacts with DLEC1. As to expression, widely expressed in adult and fetal tissues. Expressed in the developing heart, brain retina, limb buds, as well as in the developing neural tube. Expressed in the embryo in the first and second branchial arches. Expressed in parafin embedded tissue sections of brain, kidney, retina, olfactory epithelium and the ependymal layer of ventricles. Detected only in restricted regions of these tissue sections, including the ciliated border of renal tubules, the connecting cilium and the inner and outer nuclear layers of retina, and the ciliated layer of olfactory epithelia.

The protein resides in the cytoplasm. The protein localises to the cytoskeleton. Its subcellular location is the microtubule organizing center. It is found in the centrosome. It localises to the cytosol. The protein resides in the nucleus. Probable molecular chaperone that assists the folding of proteins upon ATP hydrolysis. Plays a role in the assembly of BBSome, a complex involved in ciliogenesis regulating transports vesicles to the cilia. May play a role in protein processing in limb, cardiac and reproductive system development. May play a role in cytokinesis. The protein is Molecular chaperone MKKS (Mkks) of Mus musculus (Mouse).